Consider the following 474-residue polypeptide: tRNA-2-methylthio-N(6)-dimethylallyladenosine synthase (474 aa).

Positions 3-120 constitute an MTTase N-terminal domain; sequence KKLLIKTWGC…LPEMIKQSQS (118 aa). Residues cysteine 12, cysteine 49, cysteine 83, cysteine 157, cysteine 161, and cysteine 164 each contribute to the [4Fe-4S] cluster site. The Radical SAM core domain occupies 143–375; sequence RAEGATAFVS…QQTVNTQAMR (233 aa). In terms of domain architecture, TRAM spans 378–441; sequence RQMLDTEQRV…ANSLRGELVR (64 aa).

The protein belongs to the methylthiotransferase family. MiaB subfamily. As to quaternary structure, monomer. [4Fe-4S] cluster serves as cofactor.

It is found in the cytoplasm. It carries out the reaction N(6)-dimethylallyladenosine(37) in tRNA + (sulfur carrier)-SH + AH2 + 2 S-adenosyl-L-methionine = 2-methylsulfanyl-N(6)-dimethylallyladenosine(37) in tRNA + (sulfur carrier)-H + 5'-deoxyadenosine + L-methionine + A + S-adenosyl-L-homocysteine + 2 H(+). Functionally, catalyzes the methylthiolation of N6-(dimethylallyl)adenosine (i(6)A), leading to the formation of 2-methylthio-N6-(dimethylallyl)adenosine (ms(2)i(6)A) at position 37 in tRNAs that read codons beginning with uridine. In Vibrio campbellii (strain ATCC BAA-1116), this protein is tRNA-2-methylthio-N(6)-dimethylallyladenosine synthase.